The primary structure comprises 253 residues: MAHCKTEQDDWLLAHLKYLLFIFNFFFWVGGAAVMAVGIWTLVEKSVYLSILASSTFAASAYVLIFVGGLVMTTGFLGFGAIIREQKSCLSTYFCLLLAIFLVELVAGVLAHVYYQRLSDELKRHLHSTLTEHYGQPGAAEITASVDRLQQDFKCCGSNSSADWQHSVYILSQEAIGRQVPDSCCKTVVARCGQRAHPSNIYKVEGGCMAKLEQFLADHLLLMGAVGIGVACLQICGMVLTCCLHRRLQQHFY.

Transmembrane regions (helical) follow at residues 19–39, 63–83, 93–113, and 220–240; these read LLFI…AVGI, VLIF…GAII, YFCL…LAHV, and LLLM…GMVL.

It belongs to the tetraspanin (TM4SF) family.

The protein localises to the membrane. In Rattus norvegicus (Rat), this protein is Tetraspanin-11 (Tspan11).